A 262-amino-acid polypeptide reads, in one-letter code: Small ribosomal subunit protein eS1 (262 aa).

The protein belongs to the eukaryotic ribosomal protein eS1 family. In terms of assembly, component of the small ribosomal subunit. Mature ribosomes consist of a small (40S) and a large (60S) subunit. The 40S subunit contains about 33 different proteins and 1 molecule of RNA (18S). The 60S subunit contains about 49 different proteins and 3 molecules of RNA (25S, 5.8S and 5S).

It is found in the cytoplasm. This Cryptosporidium hominis protein is Small ribosomal subunit protein eS1.